We begin with the raw amino-acid sequence, 258 residues long: Imidazole glycerol phosphate synthase subunit HisF (258 aa).

Residues D11 and D130 contribute to the active site.

Belongs to the HisA/HisF family. In terms of assembly, heterodimer of HisH and HisF.

The protein resides in the cytoplasm. The enzyme catalyses 5-[(5-phospho-1-deoxy-D-ribulos-1-ylimino)methylamino]-1-(5-phospho-beta-D-ribosyl)imidazole-4-carboxamide + L-glutamine = D-erythro-1-(imidazol-4-yl)glycerol 3-phosphate + 5-amino-1-(5-phospho-beta-D-ribosyl)imidazole-4-carboxamide + L-glutamate + H(+). It participates in amino-acid biosynthesis; L-histidine biosynthesis; L-histidine from 5-phospho-alpha-D-ribose 1-diphosphate: step 5/9. IGPS catalyzes the conversion of PRFAR and glutamine to IGP, AICAR and glutamate. The HisF subunit catalyzes the cyclization activity that produces IGP and AICAR from PRFAR using the ammonia provided by the HisH subunit. This Yersinia pestis (strain Pestoides F) protein is Imidazole glycerol phosphate synthase subunit HisF.